A 91-amino-acid polypeptide reads, in one-letter code: UPF0298 protein spyM18_0447 (91 aa).

Belongs to the UPF0298 family.

It localises to the cytoplasm. This is UPF0298 protein spyM18_0447 from Streptococcus pyogenes serotype M18 (strain MGAS8232).